The sequence spans 638 residues: Sorting nexin-41 (638 aa).

Residues 1–14 (MDSDTSPNPFASSP) show a composition bias toward low complexity. The tract at residues 1-69 (MDSDTSPNPF…MGATVPGPKP (69 aa)) is disordered. Pro residues predominate over residues 15 to 30 (PSSPSPRPSLPPPVPR). The PX domain maps to 84–201 (GEQVHIVDAL…HRFLEEDVSW (118 aa)). Residues Arg-118, Ser-120, Lys-144, and Arg-168 each coordinate a 1,2-diacyl-sn-glycero-3-phospho-(1D-myo-inositol-3-phosphate). 3 disordered regions span residues 215–239 (KNPL…SEAP), 408–432 (LERG…RERA), and 545–638 (PHPN…LGPL). Residues 225–239 (PTFQPTTPTSPSEAP) are compositionally biased toward low complexity. The span at 423–432 (EAARDERERA) shows a compositional bias: basic and acidic residues. Low complexity predominate over residues 552 to 562 (QTQTQVQSQQS). Positions 585–601 (MKNEIERVEIEIADKPL) are enriched in basic and acidic residues.

This sequence belongs to the sorting nexin family.

It localises to the endosome membrane. The protein resides in the endomembrane system. In terms of biological role, may be required for cytoplasm to vacuole transport (Cvt) and pexophagy. The protein is Sorting nexin-41 (SNX41) of Cryptococcus neoformans var. neoformans serotype D (strain B-3501A) (Filobasidiella neoformans).